The chain runs to 411 residues: Glucose-1-phosphate adenylyltransferase (411 aa).

Residues glycine 162, 177–178, and serine 195 each bind alpha-D-glucose 1-phosphate; that span reads EK.

The protein belongs to the bacterial/plant glucose-1-phosphate adenylyltransferase family. In terms of assembly, homotetramer.

It catalyses the reaction alpha-D-glucose 1-phosphate + ATP + H(+) = ADP-alpha-D-glucose + diphosphate. The protein operates within glycan biosynthesis; glycogen biosynthesis. Functionally, involved in the biosynthesis of ADP-glucose, a building block required for the elongation reactions to produce glycogen. Catalyzes the reaction between ATP and alpha-D-glucose 1-phosphate (G1P) to produce pyrophosphate and ADP-Glc. The polypeptide is Glucose-1-phosphate adenylyltransferase (Thermodesulfovibrio yellowstonii (strain ATCC 51303 / DSM 11347 / YP87)).